The sequence spans 404 residues: Sorting nexin-5 (404 aa).

Ala2 is modified (N-acetylalanine). Residues 25–172 (LNVDPSLQID…HVFLEYDQDL (148 aa)) form the PX domain. A 1,2-diacyl-sn-glycero-3-phospho-(1D-myo-inositol-4,5-bisphosphate)-binding positions include 40–46 (SERDKVK), 99–105 (FDGPREK), and 113–116 (EGSM). Residues 169-261 (DQDLSVRRKN…HSLALEEPTV (93 aa)) form an interaction with DOCK1 region. Positions 183-200 (FGGFFKSVVKSADEVLFT) are membrane-binding amphipathic helix. Ser193 carries the post-translational modification Phosphoserine. The 203-residue stretch at 202–404 (VKEVDDFFEQ…QSCIDLFKNN (203 aa)) folds into the BAR domain. Residue Lys275 is modified to N6-acetyllysine.

This sequence belongs to the sorting nexin family. As to quaternary structure, forms heterodimers with BAR domain-containing sorting nexins SNX1 and SNX2; does not homodimerize. The heterodimers are proposed to self-assemble into helical arrays on the membrane to stabilize and expand local membrane curvature underlying endosomal tubule formation. Thought to be a component of the originally described retromer complex (also called SNX-BAR retromer) which is a pentamer containing the heterotrimeric retromer cargo-selective complex (CSC), also described as vacuolar protein sorting subcomplex (VPS), and a heterodimeric membrane-deforming subcomplex formed between SNX1 or SNX2 and SNX5 or SNX6 (also called SNX-BAR subcomplex); the respective CSC and SNX-BAR subcomplexes associate with low affinity. Interacts with SNX1, SNX2, VPS26A, VPS29, VPS35, DCTN1, DOCK1, MIB1, PIP5K1C isoform 3. Interacts with HGS; increased by PIP5K1C isoform 3 kinase activity and by PtdIns(3P) and/or PtdIns(3,4)P2. In terms of assembly, (Microbial infection) Interacts with human cytomegalovirus proteins UL35 and UL35A; these interactions inhibit the ability of USP7 to form nuclear bodies.

Its subcellular location is the endosome. It is found in the early endosome. The protein resides in the early endosome membrane. It localises to the cell membrane. The protein localises to the cytoplasmic vesicle membrane. Its subcellular location is the cytoplasm. It is found in the cell projection. The protein resides in the phagocytic cup. It localises to the ruffle. Involved in several stages of intracellular trafficking. Interacts with membranes containing phosphatidylinositol 3-phosphate (PtdIns(3P)) or phosphatidylinositol 3,4-bisphosphate (PtdIns(3,4)P2). Acts in part as component of the retromer membrane-deforming SNX-BAR subcomplex. The SNX-BAR retromer mediates retrograde transport of cargo proteins from endosomes to the trans-Golgi network (TGN) and is involved in endosome-to-plasma membrane transport for cargo protein recycling. The SNX-BAR subcomplex functions to deform the donor membrane into a tubular profile called endosome-to-TGN transport carrier (ETC). Does not have in vitro vesicle-to-membrane remodeling activity. Involved in retrograde transport of lysosomal enzyme receptor IGF2R. May function as link between endosomal transport vesicles and dynactin. Plays a role in the internalization of EGFR after EGF stimulation. Involved in EGFR endosomal sorting and degradation; the function involves PIP5K1C isoform 3 and is retromer-independent. Together with PIP5K1C isoform 3 facilitates HGS interaction with ubiquitinated EGFR, which initiates EGFR sorting to intraluminal vesicles (ILVs) of the multivesicular body for subsequent lysosomal degradation. Involved in E-cadherin sorting and degradation; inhibits PIP5K1C isoform 3-mediated E-cadherin degradation. Plays a role in macropinocytosis. In Homo sapiens (Human), this protein is Sorting nexin-5 (SNX5).